We begin with the raw amino-acid sequence, 120 residues long: ATP-dependent Clp protease adapter protein ClpS (120 aa).

This sequence belongs to the ClpS family. As to quaternary structure, binds to the N-terminal domain of the chaperone ClpA.

Involved in the modulation of the specificity of the ClpAP-mediated ATP-dependent protein degradation. The chain is ATP-dependent Clp protease adapter protein ClpS from Pseudomonas syringae pv. tomato (strain ATCC BAA-871 / DC3000).